The primary structure comprises 214 residues: Putative pit accessory protein (214 aa).

It belongs to the UPF0111 family.

Could be involved in orthophosphate transport. This chain is Putative pit accessory protein, found in Rhizobium meliloti (strain 1021) (Ensifer meliloti).